The primary structure comprises 131 residues: Large ribosomal subunit protein bL17 (131 aa).

This sequence belongs to the bacterial ribosomal protein bL17 family. In terms of assembly, part of the 50S ribosomal subunit. Contacts protein L32.

This chain is Large ribosomal subunit protein bL17, found in Bordetella parapertussis (strain 12822 / ATCC BAA-587 / NCTC 13253).